Here is a 393-residue protein sequence, read N- to C-terminus: Acetylornithine aminotransferase (393 aa).

Pyridoxal 5'-phosphate is bound by residues 100–101 (GA) and Phe-133. Residue Arg-136 coordinates N(2)-acetyl-L-ornithine. Residue 218-221 (DEVQ) participates in pyridoxal 5'-phosphate binding. The residue at position 247 (Lys-247) is an N6-(pyridoxal phosphate)lysine. Ser-274 provides a ligand contact to N(2)-acetyl-L-ornithine. Thr-275 provides a ligand contact to pyridoxal 5'-phosphate.

The protein belongs to the class-III pyridoxal-phosphate-dependent aminotransferase family. ArgD subfamily. As to quaternary structure, homodimer. Pyridoxal 5'-phosphate serves as cofactor.

It is found in the cytoplasm. It catalyses the reaction N(2)-acetyl-L-ornithine + 2-oxoglutarate = N-acetyl-L-glutamate 5-semialdehyde + L-glutamate. Its pathway is amino-acid biosynthesis; L-arginine biosynthesis; N(2)-acetyl-L-ornithine from L-glutamate: step 4/4. This chain is Acetylornithine aminotransferase, found in Caldanaerobacter subterraneus subsp. tengcongensis (strain DSM 15242 / JCM 11007 / NBRC 100824 / MB4) (Thermoanaerobacter tengcongensis).